Reading from the N-terminus, the 91-residue chain is Small ribosomal subunit protein bS18 (91 aa).

A disordered region spans residues 1-27; it reads MTQQSNTERKPRAKGPKRPRKPKVDPF. Over residues 11-21 the composition is skewed to basic residues; that stretch reads PRAKGPKRPRK.

It belongs to the bacterial ribosomal protein bS18 family. Part of the 30S ribosomal subunit. Forms a tight heterodimer with protein bS6.

Binds as a heterodimer with protein bS6 to the central domain of the 16S rRNA, where it helps stabilize the platform of the 30S subunit. The protein is Small ribosomal subunit protein bS18 of Deinococcus geothermalis (strain DSM 11300 / CIP 105573 / AG-3a).